The sequence spans 860 residues: Leucine--tRNA ligase (860 aa).

Positions 42–52 match the 'HIGH' region motif; it reads PYPSGRLHMGH. The short motif at 619–623 is the 'KMSKS' region element; that stretch reads KMSKS. K622 contacts ATP.

The protein belongs to the class-I aminoacyl-tRNA synthetase family.

The protein localises to the cytoplasm. It carries out the reaction tRNA(Leu) + L-leucine + ATP = L-leucyl-tRNA(Leu) + AMP + diphosphate. The chain is Leucine--tRNA ligase from Escherichia coli (strain SE11).